Here is a 422-residue protein sequence, read N- to C-terminus: Metallocarboxypeptidase A (422 aa).

The signal sequence occupies residues 1–17 (MRSVLSFALLAANVVSA). Positions 18 to 112 (AVLAPFDYSG…FEAYSAGYAP (95 aa)) are cleaved as a propeptide — activation peptide. Residues 119–419 (SYHSYQDHLS…AGTVAMLKAV (301 aa)) form the Peptidase M14 domain. Zn(2+) contacts are provided by His179 and Glu182. Substrate contacts are provided by residues 179–182 (HARE), Arg237, and 254–255 (NR). Cys248 and Cys271 are disulfide-bonded. His309 contacts Zn(2+). Position 310–311 (310–311 (SY)) interacts with substrate. Glu385 functions as the Proton donor/acceptor in the catalytic mechanism.

Belongs to the peptidase M14 family. Zn(2+) serves as cofactor.

Its subcellular location is the secreted. Functionally, extracellular metalloprotease that contributes to pathogenicity. The sequence is that of Metallocarboxypeptidase A (MCPA) from Arthroderma otae (strain ATCC MYA-4605 / CBS 113480) (Microsporum canis).